Here is a 260-residue protein sequence, read N- to C-terminus: Snake venom serine protease KN6 (260 aa).

An N-terminal signal peptide occupies residues 1-18 (MVLIRVLANLLILQLSYA). The propeptide occupies 19–24 (QKSSEL). Positions 25-251 (VIGGDECNIN…HLDWIQSIIA (227 aa)) constitute a Peptidase S1 domain. 5 cysteine pairs are disulfide-bonded: Cys-31/Cys-165, Cys-100/Cys-258, Cys-144/Cys-212, Cys-176/Cys-191, and Cys-202/Cys-227. Residue His-67 is the Charge relay system of the active site. Asn-105 is a glycosylation site (N-linked (GlcNAc...) asparagine). The active-site Charge relay system is Asp-112. A glycan (N-linked (GlcNAc...) asparagine) is linked at Asn-172. Ser-206 functions as the Charge relay system in the catalytic mechanism. 2 N-linked (GlcNAc...) asparagine glycosylation sites follow: Asn-213 and Asn-255.

It belongs to the peptidase S1 family. Snake venom subfamily. Monomer. In terms of tissue distribution, expressed by the venom gland.

The protein localises to the secreted. Functionally, snake venom serine protease that may act in the hemostasis system of the prey. In Trimeresurus stejnegeri (Chinese green tree viper), this protein is Snake venom serine protease KN6.